An 802-amino-acid polypeptide reads, in one-letter code: Leucine--tRNA ligase (802 aa).

A 'HIGH' region motif is present at residues 40–51 (PYPSGAGLHVGH). The 'KMSKS' region signature appears at 576 to 580 (KMSKS). Lysine 579 contacts ATP.

The protein belongs to the class-I aminoacyl-tRNA synthetase family.

It is found in the cytoplasm. The catalysed reaction is tRNA(Leu) + L-leucine + ATP = L-leucyl-tRNA(Leu) + AMP + diphosphate. This Bacillus cytotoxicus (strain DSM 22905 / CIP 110041 / 391-98 / NVH 391-98) protein is Leucine--tRNA ligase.